Consider the following 1073-residue polypeptide: Carbamoyl phosphate synthase large chain (1073 aa).

Positions 2-403 (PKRTDIKSIL…SLQKALRGLE (402 aa)) are carboxyphosphate synthetic domain. Residues Arg-129, Arg-169, Gly-175, Gly-176, Glu-208, Leu-210, Glu-215, Gly-241, Ile-242, His-243, Gln-285, and Glu-299 each contribute to the ATP site. One can recognise an ATP-grasp 1 domain in the interval 133–328 (DVAMKKIGLE…IAKVAAKLAV (196 aa)). Mg(2+) is bound by residues Gln-285, Glu-299, and Asn-301. Positions 285, 299, and 301 each coordinate Mn(2+). An oligomerization domain region spans residues 404-553 (VGATGFDPKV…YSTYEEECEA (150 aa)). Residues 554-936 (NPSTDREKIM…AFAKAQLGSN (383 aa)) form a carbamoyl phosphate synthetic domain region. The ATP-grasp 2 domain occupies 679–870 (QHAVERLKLK…LAKVAARVMA (192 aa)). Residues Arg-715, His-754, Leu-756, Glu-761, Gly-786, Val-787, His-788, Ser-789, Gln-829, and Glu-841 each coordinate ATP. 3 residues coordinate Mg(2+): Gln-829, Glu-841, and Asn-843. 3 residues coordinate Mn(2+): Gln-829, Glu-841, and Asn-843. Residues 937-1073 (STMKKHGRAL…SVQEMHAQIK (137 aa)) form the MGS-like domain. The interval 937-1073 (STMKKHGRAL…SVQEMHAQIK (137 aa)) is allosteric domain.

The protein belongs to the CarB family. In terms of assembly, composed of two chains; the small (or glutamine) chain promotes the hydrolysis of glutamine to ammonia, which is used by the large (or ammonia) chain to synthesize carbamoyl phosphate. Tetramer of heterodimers (alpha,beta)4. Mg(2+) serves as cofactor. Requires Mn(2+) as cofactor.

The enzyme catalyses hydrogencarbonate + L-glutamine + 2 ATP + H2O = carbamoyl phosphate + L-glutamate + 2 ADP + phosphate + 2 H(+). The catalysed reaction is hydrogencarbonate + NH4(+) + 2 ATP = carbamoyl phosphate + 2 ADP + phosphate + 2 H(+). The protein operates within amino-acid biosynthesis; L-arginine biosynthesis; carbamoyl phosphate from bicarbonate: step 1/1. Its pathway is pyrimidine metabolism; UMP biosynthesis via de novo pathway; (S)-dihydroorotate from bicarbonate: step 1/3. Functionally, large subunit of the glutamine-dependent carbamoyl phosphate synthetase (CPSase). CPSase catalyzes the formation of carbamoyl phosphate from the ammonia moiety of glutamine, carbonate, and phosphate donated by ATP, constituting the first step of 2 biosynthetic pathways, one leading to arginine and/or urea and the other to pyrimidine nucleotides. The large subunit (synthetase) binds the substrates ammonia (free or transferred from glutamine from the small subunit), hydrogencarbonate and ATP and carries out an ATP-coupled ligase reaction, activating hydrogencarbonate by forming carboxy phosphate which reacts with ammonia to form carbamoyl phosphate. The chain is Carbamoyl phosphate synthase large chain from Escherichia coli O6:H1 (strain CFT073 / ATCC 700928 / UPEC).